Here is a 782-residue protein sequence, read N- to C-terminus: Endonuclease MutS2 (782 aa).

336–343 (GPNTGGKT) contacts ATP. The Smr domain occupies 707 to 782 (LDLRGYRYED…GFGVTVATLK (76 aa)).

This sequence belongs to the DNA mismatch repair MutS family. MutS2 subfamily. In terms of assembly, homodimer. Binds to stalled ribosomes, contacting rRNA.

In terms of biological role, endonuclease that is involved in the suppression of homologous recombination and thus may have a key role in the control of bacterial genetic diversity. Functionally, acts as a ribosome collision sensor, splitting the ribosome into its 2 subunits. Detects stalled/collided 70S ribosomes which it binds and splits by an ATP-hydrolysis driven conformational change. Acts upstream of the ribosome quality control system (RQC), a ribosome-associated complex that mediates the extraction of incompletely synthesized nascent chains from stalled ribosomes and their subsequent degradation. Probably generates substrates for RQC. In Staphylococcus aureus (strain bovine RF122 / ET3-1), this protein is Endonuclease MutS2.